A 317-amino-acid chain; its full sequence is GTPase Era (317 aa).

Residues 17 to 190 (RAGFACFVGR…ADLLTPLLPE (174 aa)) enclose the Era-type G domain. The segment at 25–32 (GRPNAGKS) is G1. Residue 25–32 (GRPNAGKS) participates in GTP binding. Positions 51–55 (QTTRH) are G2. The G3 stretch occupies residues 72 to 75 (DTPG). GTP-binding positions include 72–76 (DTPGL) and 135–138 (TKTD). A G4 region spans residues 135–138 (TKTD). The segment at 169–171 (VSA) is G5. Positions 221-303 (VRDELPHSIA…FLDLHVKVAK (83 aa)) constitute a KH type-2 domain.

This sequence belongs to the TRAFAC class TrmE-Era-EngA-EngB-Septin-like GTPase superfamily. Era GTPase family. As to quaternary structure, monomer.

Its subcellular location is the cytoplasm. It localises to the cell membrane. Its function is as follows. An essential GTPase that binds both GDP and GTP, with rapid nucleotide exchange. Plays a role in 16S rRNA processing and 30S ribosomal subunit biogenesis and possibly also in cell cycle regulation and energy metabolism. This Streptomyces coelicolor (strain ATCC BAA-471 / A3(2) / M145) protein is GTPase Era.